Reading from the N-terminus, the 494-residue chain is Cytochrome P450 2A10 (494 aa).

Residue lysine 379 is modified to N6-acetyllysine. Cysteine 439 serves as a coordination point for heme.

This sequence belongs to the cytochrome P450 family. Requires heme as cofactor. As to expression, expressed in liver and lung as well as in nasal tissues.

It localises to the endoplasmic reticulum membrane. The protein localises to the microsome membrane. The enzyme catalyses an organic molecule + reduced [NADPH--hemoprotein reductase] + O2 = an alcohol + oxidized [NADPH--hemoprotein reductase] + H2O + H(+). Its function is as follows. Catalyzes the oxygenation of a variety of substrates, including ethanol and procarcinogens such as N-nitrosodiethylamine and phenacetin. Exhibits a high coumarin 7-hydroxylase activity. Converts also testosterone to androstenedione. The chain is Cytochrome P450 2A10 (CYP2A10) from Oryctolagus cuniculus (Rabbit).